Here is a 235-residue protein sequence, read N- to C-terminus: Glucosamine-6-phosphate deaminase (235 aa).

The Proton acceptor; for enolization step role is filled by Asp62. Residue Asn128 is the For ring-opening step of the active site. The active-site Proton acceptor; for ring-opening step is His130. The For ring-opening step role is filled by Glu135.

It belongs to the glucosamine/galactosamine-6-phosphate isomerase family. NagB subfamily.

It catalyses the reaction alpha-D-glucosamine 6-phosphate + H2O = beta-D-fructose 6-phosphate + NH4(+). It functions in the pathway amino-sugar metabolism; N-acetylneuraminate degradation; D-fructose 6-phosphate from N-acetylneuraminate: step 5/5. Functionally, catalyzes the reversible isomerization-deamination of glucosamine 6-phosphate (GlcN6P) to form fructose 6-phosphate (Fru6P) and ammonium ion. The sequence is that of Glucosamine-6-phosphate deaminase from Streptococcus pneumoniae serotype 2 (strain D39 / NCTC 7466).